The primary structure comprises 800 residues: Cell division cycle 5-like protein (800 aa).

2 consecutive HTH myb-type domains span residues M1–I56 and K57–Q106. 2 consecutive DNA-binding regions (H-T-H motif) follow at residues W29–L52 and W80–L102. Disordered regions lie at residues Q109–F186, Y334–T378, Q399–L445, and N571–D610. The span at N113–T122 shows a compositional bias: gly residues. A compositionally biased stretch (basic and acidic residues) spans N133–D142. The segment covering S340–V351 has biased composition (gly residues). The segment covering T361–I376 has biased composition (low complexity). Composition is skewed to polar residues over residues N409–L445 and T573–T584. Residues D592–I601 are compositionally biased toward basic and acidic residues. Coiled coils occupy residues N621–N700 and V748–F800.

This sequence belongs to the CEF1 family. In terms of assembly, component of the precatalytic, catalytic and postcatalytic spliceosome complexes.

The protein localises to the nucleus. It is found in the cytoplasm. DNA-binding protein involved in cell cycle control. May act as a transcription activator. Plays a role in pre-mRNA splicing as core component of precatalytic, catalytic and postcatalytic spliceosomal complexes. May also play a role in the response to DNA damage (DDR). The chain is Cell division cycle 5-like protein (cdc5l) from Dictyostelium discoideum (Social amoeba).